A 325-amino-acid chain; its full sequence is DNA-directed RNA polymerase subunit alpha (325 aa).

An alpha N-terminal domain (alpha-NTD) region spans residues 1–238; the sequence is MSLKSLLKGF…EHLTVFINFE (238 aa). The tract at residues 255–325 is alpha C-terminal domain (alpha-CTD); that stretch reads LKASLSKHVE…LGLSFGMRDF (71 aa).

This sequence belongs to the RNA polymerase alpha chain family. Homodimer. The RNAP catalytic core consists of 2 alpha, 1 beta, 1 beta' and 1 omega subunit. When a sigma factor is associated with the core the holoenzyme is formed, which can initiate transcription.

The catalysed reaction is RNA(n) + a ribonucleoside 5'-triphosphate = RNA(n+1) + diphosphate. In terms of biological role, DNA-dependent RNA polymerase catalyzes the transcription of DNA into RNA using the four ribonucleoside triphosphates as substrates. In Leptospira interrogans serogroup Icterohaemorrhagiae serovar copenhageni (strain Fiocruz L1-130), this protein is DNA-directed RNA polymerase subunit alpha.